We begin with the raw amino-acid sequence, 53 residues long: Photosystem II reaction center protein K (53 aa).

A propeptide spanning residues 1 to 16 is cleaved from the precursor; the sequence is MFYTNVETLLNTNCFA. The chain crosses the membrane as a helical span at residues 28–48; sequence LVDVLPIIPLLFLLLAFVWQA.

Belongs to the PsbK family. In terms of assembly, PSII is composed of 1 copy each of membrane proteins PsbA, PsbB, PsbC, PsbD, PsbE, PsbF, PsbH, PsbI, PsbJ, PsbK, PsbL, PsbM, PsbT, PsbY, PsbZ, Psb30/Ycf12, at least 3 peripheral proteins of the oxygen-evolving complex and a large number of cofactors. It forms dimeric complexes.

It is found in the plastid. Its subcellular location is the chloroplast thylakoid membrane. One of the components of the core complex of photosystem II (PSII). PSII is a light-driven water:plastoquinone oxidoreductase that uses light energy to abstract electrons from H(2)O, generating O(2) and a proton gradient subsequently used for ATP formation. It consists of a core antenna complex that captures photons, and an electron transfer chain that converts photonic excitation into a charge separation. The polypeptide is Photosystem II reaction center protein K (Euglena anabaena (Euglenaria anabaena)).